The chain runs to 142 residues: Large ribosomal subunit protein uL11 (142 aa).

Belongs to the universal ribosomal protein uL11 family. As to quaternary structure, part of the ribosomal stalk of the 50S ribosomal subunit. Interacts with L10 and the large rRNA to form the base of the stalk. L10 forms an elongated spine to which L12 dimers bind in a sequential fashion forming a multimeric L10(L12)X complex. In terms of processing, one or more lysine residues are methylated.

Forms part of the ribosomal stalk which helps the ribosome interact with GTP-bound translation factors. This Buchnera aphidicola subsp. Schizaphis graminum (strain Sg) protein is Large ribosomal subunit protein uL11.